The chain runs to 232 residues: MGKMGKRFAAAKAAVEGKENITVEEAVALLKGNSKTKFDETIEIAMKLGVDPRHADQMVRGTVNLPNGTGKTVRVAVFARGPKAEEATAAGADIVGAEDLMETVQGGTIEFDRCIATPDMMPIVGRLGKVLGPRNLMPNPKIGTVTMDVKEAVEAAKGGQVQFKAEKAGVVHAGVGKASFTEAQLVENVRAFVDAVSKAKPSGSKGTYMQKINLTSTMGPGVSLSVENATGN.

Belongs to the universal ribosomal protein uL1 family. In terms of assembly, part of the 50S ribosomal subunit.

In terms of biological role, binds directly to 23S rRNA. The L1 stalk is quite mobile in the ribosome, and is involved in E site tRNA release. Its function is as follows. Protein L1 is also a translational repressor protein, it controls the translation of the L11 operon by binding to its mRNA. The protein is Large ribosomal subunit protein uL1 of Jannaschia sp. (strain CCS1).